We begin with the raw amino-acid sequence, 465 residues long: UDP-N-acetylmuramate--L-alanine ligase (465 aa).

Glycine 125–threonine 131 contacts ATP.

This sequence belongs to the MurCDEF family.

The protein resides in the cytoplasm. The enzyme catalyses UDP-N-acetyl-alpha-D-muramate + L-alanine + ATP = UDP-N-acetyl-alpha-D-muramoyl-L-alanine + ADP + phosphate + H(+). It participates in cell wall biogenesis; peptidoglycan biosynthesis. Functionally, cell wall formation. This Deinococcus geothermalis (strain DSM 11300 / CIP 105573 / AG-3a) protein is UDP-N-acetylmuramate--L-alanine ligase.